The following is a 65-amino-acid chain: Large ribosomal subunit protein bL35 (65 aa).

Residues 1-52 (MPKIKTNRGAAKRFKRTGSGGFKCVQSHRRHILTKKSTKRKRQLRSPDMVHP) are disordered. Residues 26-44 (QSHRRHILTKKSTKRKRQL) are compositionally biased toward basic residues.

Belongs to the bacterial ribosomal protein bL35 family.

The polypeptide is Large ribosomal subunit protein bL35 (Methylococcus capsulatus (strain ATCC 33009 / NCIMB 11132 / Bath)).